A 772-amino-acid polypeptide reads, in one-letter code: DNA ligase (772 aa).

Residues D80–D84, S130–L131, and E160 contribute to the NAD(+) site. K162 functions as the N6-AMP-lysine intermediate in the catalytic mechanism. The NAD(+) site is built by R183, E220, K336, and K360. Positions 454, 457, 473, and 479 each coordinate Zn(2+). Residues A685–G772 enclose the BRCT domain.

This sequence belongs to the NAD-dependent DNA ligase family. LigA subfamily. Mg(2+) is required as a cofactor. Requires Mn(2+) as cofactor.

The catalysed reaction is NAD(+) + (deoxyribonucleotide)n-3'-hydroxyl + 5'-phospho-(deoxyribonucleotide)m = (deoxyribonucleotide)n+m + AMP + beta-nicotinamide D-nucleotide.. Its function is as follows. DNA ligase that catalyzes the formation of phosphodiester linkages between 5'-phosphoryl and 3'-hydroxyl groups in double-stranded DNA using NAD as a coenzyme and as the energy source for the reaction. It is essential for DNA replication and repair of damaged DNA. This Cutibacterium acnes (strain DSM 16379 / KPA171202) (Propionibacterium acnes) protein is DNA ligase.